Here is a 55-residue protein sequence, read N- to C-terminus: Large ribosomal subunit protein bL33 (55 aa).

Belongs to the bacterial ribosomal protein bL33 family.

The sequence is that of Large ribosomal subunit protein bL33 from Rhodopseudomonas palustris (strain BisA53).